Reading from the N-terminus, the 230-residue chain is Large ribosomal subunit protein uL1 (230 aa).

This sequence belongs to the universal ribosomal protein uL1 family. Part of the 50S ribosomal subunit.

Its function is as follows. Binds directly to 23S rRNA. The L1 stalk is quite mobile in the ribosome, and is involved in E site tRNA release. Functionally, protein L1 is also a translational repressor protein, it controls the translation of the L11 operon by binding to its mRNA. The protein is Large ribosomal subunit protein uL1 of Bifidobacterium longum (strain DJO10A).